We begin with the raw amino-acid sequence, 829 residues long: Pre-mRNA-splicing factor syf1 (829 aa).

HAT repeat units follow at residues 15 to 47 (SLVSEEDFPYEQDIVRNPGSTKPWLAYIEYKLQ), 49 to 81 (GTVQEQAYIMERACVQLPRSYKLWKMYLRFRTK), 93 to 125 (SEYQKVNSLFERALILLNKMPRIWEMYLKFLMQ), 127 to 161 (PLVTHTRRTFDRALRALPITQHNRIWALYRPFANS), 163 to 182 (EGETAVKIWRRYMQVHPEDA), 277 to 312 (GSFERARDVFEEGITTVMTVRDFTLVFDSYTEFEES), 380 to 418 (DNKEEVVKTYLDAIEAIQPKKAVGALHQLWTNYAKFYEA), 420 to 456 (GDLSSARRIMEKAVKVPYKSVAELADMWIEWAEMELR), 473 to 505 (APKRSTVDYFDETLSPQQRVHKSWKLWSFYVDL), 544 to 578 (KYFEESFKIYERGLDLFSYPVAFELWNLYLTKAVD), 581 to 615 (ISIERLRDLFEQAVEDCPPKFAKVIYLMYGNLEEE), and 689 to 723 (GEIDRARAIYGHASQFCDPRTNPGFWTKWDQFEVQ). The segment at 799–829 (AASEGPKGGSMPVQPVEVHNPDAIDLDEMDE) is disordered.

The protein belongs to the crooked-neck family. As to quaternary structure, associated with the spliceosome.

It localises to the nucleus. Functionally, involved in pre-mRNA splicing and cell cycle progression. The sequence is that of Pre-mRNA-splicing factor syf1 (msp-41) from Neurospora crassa (strain ATCC 24698 / 74-OR23-1A / CBS 708.71 / DSM 1257 / FGSC 987).